We begin with the raw amino-acid sequence, 177 residues long: Large ribosomal subunit protein uL6 (177 aa).

The protein belongs to the universal ribosomal protein uL6 family. As to quaternary structure, part of the 50S ribosomal subunit.

In terms of biological role, this protein binds to the 23S rRNA, and is important in its secondary structure. It is located near the subunit interface in the base of the L7/L12 stalk, and near the tRNA binding site of the peptidyltransferase center. The sequence is that of Large ribosomal subunit protein uL6 from Pseudomonas syringae pv. syringae (strain B728a).